We begin with the raw amino-acid sequence, 207 residues long: Probable GTP-binding protein EngB (207 aa).

Residues 22–194 enclose the EngB-type G domain; that stretch reads DLPEVAFAGR…LQRLDVALSD (173 aa). GTP contacts are provided by residues 30–37, 57–61, 75–78, 142–145, and 173–175; these read GRSNVGKS, GRTQL, DLPG, TKVD, and FSA. Ser-37 and Thr-59 together coordinate Mg(2+).

It belongs to the TRAFAC class TrmE-Era-EngA-EngB-Septin-like GTPase superfamily. EngB GTPase family. The cofactor is Mg(2+).

Its function is as follows. Necessary for normal cell division and for the maintenance of normal septation. The protein is Probable GTP-binding protein EngB of Syntrophotalea carbinolica (strain DSM 2380 / NBRC 103641 / GraBd1) (Pelobacter carbinolicus).